Consider the following 374-residue polypeptide: Cytochrome b (374 aa).

4 consecutive transmembrane segments (helical) span residues phenylalanine 25–isoleucine 45, tryptophan 69–isoleucine 90, tryptophan 105–leucine 125, and phenylalanine 170–isoleucine 190. 2 residues coordinate heme b: histidine 75 and histidine 89. Heme b contacts are provided by histidine 174 and histidine 188. Residue histidine 193 participates in a ubiquinone binding. 4 helical membrane passes run tyrosine 218 to threonine 238, leucine 280 to histidine 300, leucine 312 to threonine 332, and phenylalanine 339 to proline 358.

Belongs to the cytochrome b family. In terms of assembly, the cytochrome bc1 complex contains 3 respiratory subunits (MT-CYB, CYC1 and UQCRFS1), 2 core proteins (UQCRC1 and UQCRC2) and probably 6 low-molecular weight proteins. It depends on heme b as a cofactor.

It is found in the mitochondrion inner membrane. Functionally, component of the ubiquinol-cytochrome c reductase complex (complex III or cytochrome b-c1 complex) that is part of the mitochondrial respiratory chain. The b-c1 complex mediates electron transfer from ubiquinol to cytochrome c. Contributes to the generation of a proton gradient across the mitochondrial membrane that is then used for ATP synthesis. This chain is Cytochrome b (MT-CYB), found in Calliophis bivirgatus (Blue Malaysian coral snake).